Reading from the N-terminus, the 304-residue chain is Dihydroorotate dehydrogenase B (NAD(+)), catalytic subunit (304 aa).

FMN contacts are provided by residues Ser-21 and 45–46; that span reads KA. Substrate is bound by residues Lys-45 and 69–73; that span reads NAIGL. FMN-binding residues include Asn-99 and Asn-127. Asn-127 provides a ligand contact to substrate. The active-site Nucleophile is the Cys-130. FMN contacts are provided by Lys-165 and Ile-191. 192-193 contacts substrate; sequence NT. Residues Gly-217, 243 to 244, and 265 to 266 each bind FMN; these read GG and GT.

It belongs to the dihydroorotate dehydrogenase family. Type 1 subfamily. As to quaternary structure, heterotetramer of 2 PyrK and 2 PyrD type B subunits. It depends on FMN as a cofactor.

It localises to the cytoplasm. It carries out the reaction (S)-dihydroorotate + NAD(+) = orotate + NADH + H(+). Its pathway is pyrimidine metabolism; UMP biosynthesis via de novo pathway; orotate from (S)-dihydroorotate (NAD(+) route): step 1/1. Functionally, catalyzes the conversion of dihydroorotate to orotate with NAD(+) as electron acceptor. The chain is Dihydroorotate dehydrogenase B (NAD(+)), catalytic subunit (pyrD) from Shouchella clausii (strain KSM-K16) (Alkalihalobacillus clausii).